The sequence spans 97 residues: Large ribosomal subunit protein uL23 (97 aa).

The protein belongs to the universal ribosomal protein uL23 family. As to quaternary structure, part of the 50S ribosomal subunit. Contacts protein L29, and trigger factor when it is bound to the ribosome.

One of the early assembly proteins it binds 23S rRNA. One of the proteins that surrounds the polypeptide exit tunnel on the outside of the ribosome. Forms the main docking site for trigger factor binding to the ribosome. The protein is Large ribosomal subunit protein uL23 of Allorhizobium ampelinum (strain ATCC BAA-846 / DSM 112012 / S4) (Agrobacterium vitis (strain S4)).